The primary structure comprises 383 residues: Mannan endo-1,4-beta-mannosidase A (383 aa).

Positions 1–18 (MKFSQALLSLASLALAAA) are cleaved as a signal peptide. Asparagine 75 carries an N-linked (GlcNAc...) asparagine glycan. Tryptophan 97 lines the substrate pocket. Asparagine 199 carries N-linked (GlcNAc...) asparagine glycosylation. Residues asparagine 210 and 211 to 213 (EPR) each bind substrate. Glutamate 211 serves as the catalytic Proton donor/acceptor. A disulfide bridge links cysteine 214 with cysteine 217. Residues tyrosine 279 and tryptophan 283 each coordinate substrate. A disulfide bond links cysteine 301 and cysteine 308. Glutamate 312 (nucleophile) is an active-site residue. The cysteines at positions 320 and 369 are disulfide-linked. N-linked (GlcNAc...) asparagine glycosylation occurs at asparagine 332. Tryptophan 342 contributes to the substrate binding site.

This sequence belongs to the glycosyl hydrolase 5 (cellulase A) family. As to quaternary structure, monomer.

It localises to the secreted. The enzyme catalyses Random hydrolysis of (1-&gt;4)-beta-D-mannosidic linkages in mannans, galactomannans and glucomannans.. Endo-1,4-mannanase that catalyzes the random hydrolysis of (1-&gt;4)-beta-D-mannosidic linkages in mannans and heteromannans. It is a crucial enzyme for depolymerization of seed galactomannans and wood galactoglucomannans. Active against locust bean gum and gum guar. Also has transglycosylation activity. This is Mannan endo-1,4-beta-mannosidase A (manA) from Emericella nidulans (strain FGSC A4 / ATCC 38163 / CBS 112.46 / NRRL 194 / M139) (Aspergillus nidulans).